A 307-amino-acid polypeptide reads, in one-letter code: N-acetylglucosamine-1-phosphotransferase subunit gamma (307 aa).

The first 24 residues, 1 to 24 (MAGRLAGFLMLLGLASQGPAPAYA), serve as a signal peptide directing secretion. The 103-residue stretch at 69–171 (GKCFSLVEST…TFETPLVCHP (103 aa)) folds into the MRH domain. Cys-71 and Cys-84 are disulfide-bonded. N-linked (GlcNAc...) asparagine glycans are attached at residues Asn-88 and Asn-115. 2 cysteine pairs are disulfide-bonded: Cys-129/Cys-157 and Cys-142/Cys-169. Residues 176 to 279 (VYPTLSEALQ…HTQPTETTHS (104 aa)) form the DMAP1-binding domain.

In terms of assembly, homodimer; disulfide-linked. Hexamer of two alpha (GNPTAB), two beta (GNPTAB) and two gamma (GNPTG) subunits; disulfide-linked. The alpha and/or the beta subunits of the enzyme constitute the catalytic subunits. In terms of processing, cys-245 mediates the formation of the interchain disulfide bond for formation of the homodimer. Cys-142, Cys-157 and Cys-169 are involved in intramolecular disulfide bonds formation. In terms of tissue distribution, widely expressed. Highly expressed in the liver, intestine, brain, thymus, testis and ovary.

It is found in the secreted. It localises to the golgi apparatus. Its function is as follows. Non-catalytic subunit of the N-acetylglucosamine-1-phosphotransferase complex, an enzyme that catalyzes the formation of mannose 6-phosphate (M6P) markers on high mannose type oligosaccharides in the Golgi apparatus. Binds and presents the high mannose glycans of the acceptor to the catalytic alpha and beta subunits (GNPTAB). Enhances the rate of N-acetylglucosamine-1-phosphate transfer to the oligosaccharides of acid hydrolase acceptors. The protein is N-acetylglucosamine-1-phosphotransferase subunit gamma (Gnptg) of Mus musculus (Mouse).